The following is an 862-amino-acid chain: Cadherin-related family member 5 (862 aa).

Positions M1–A28 are cleaved as a signal peptide. Over Q29–A671 the chain is Extracellular. N-linked (GlcNAc...) asparagine glycans are attached at residues N36, N45, N135, N173, N201, N311, N408, N438, and N479. 4 consecutive Cadherin domains span residues F40 to F127, P128 to F240, I252 to F357, and S358 to T462. The segment at I452 to E658 is disordered. Residues S461–G500 are compositionally biased toward low complexity. The span at L529 to P652 shows a compositional bias: polar residues. 3 consecutive repeat copies span residues T545 to S575, T576 to S606, and T607 to S636. The tract at residues T545 to T648 is 4 X 31 AA approximate tandem repeats. Residues T637–T648 form a 4; truncated repeat. A helical membrane pass occupies residues V672–I692. The Cytoplasmic portion of the chain corresponds to H693 to V862. The tract at residues H693–V862 is mediates interaction with USH1C and MYO7B and is required for proper localization to microvilli tips and function in microvilli organization. Disordered stretches follow at residues K706–Y803 and L821–V862. Phosphoserine is present on residues S729, S751, and S755. A compositionally biased stretch (pro residues) spans G739 to Q768. At T758 the chain carries Phosphothreonine. 2 positions are modified to phosphoserine: S766 and S783. The span at L791–G801 shows a compositional bias: basic and acidic residues. T825 carries the phosphothreonine modification. Over residues D827–E837 the composition is skewed to low complexity. A phosphoserine mark is found at S832, S834, and S836.

As to quaternary structure, part of the IMAC/intermicrovillar adhesion complex/intermicrovillar tip-link complex composed of ANKS4B, MYO7B, USH1C, CDHR2 and CDHR5. Interacts (via cytoplasmic domain) with USH1C and MYO7B; required for proper localization of CDHR5 to microvilli tips and its function in brush border differentiation. N- and O-glycosylated. Expressed predominantly in kidney. Also detected in lung and small intestine.

The protein localises to the apical cell membrane. The protein resides in the cell projection. It localises to the microvillus membrane. Intermicrovillar adhesion molecule that forms, via its extracellular domain, calcium-dependent heterophilic complexes with CDHR2 on adjacent microvilli. Thereby, controls the packing of microvilli at the apical membrane of epithelial cells. Through its cytoplasmic domain, interacts with microvillus cytoplasmic proteins to form the intermicrovillar adhesion complex/IMAC. This complex plays a central role in microvilli and epithelial brush border differentiation. In Rattus norvegicus (Rat), this protein is Cadherin-related family member 5.